The primary structure comprises 340 residues: Ferrochelatase (340 aa).

The Fe cation site is built by His-218 and Glu-298.

Belongs to the ferrochelatase family.

Its subcellular location is the cytoplasm. It catalyses the reaction heme b + 2 H(+) = protoporphyrin IX + Fe(2+). Its pathway is porphyrin-containing compound metabolism; protoheme biosynthesis; protoheme from protoporphyrin-IX: step 1/1. Functionally, catalyzes the ferrous insertion into protoporphyrin IX. The sequence is that of Ferrochelatase from Wolbachia sp. subsp. Brugia malayi (strain TRS).